Reading from the N-terminus, the 330-residue chain is ADP-L-glycero-D-manno-heptose-6-epimerase (330 aa).

NADP(+)-binding positions include 11–12, 32–33, Lys39, Lys54, 75–79, and Asn92; these read FI, DN, and EGACS. Tyr139 (proton acceptor) is an active-site residue. Lys143 lines the NADP(+) pocket. Asn168 serves as a coordination point for substrate. 2 residues coordinate NADP(+): Val169 and Lys177. The active-site Proton acceptor is Lys177. Residues Arg179, His186, 200 to 203, Arg213, and Tyr292 each bind substrate; that span reads FGEY.

Belongs to the NAD(P)-dependent epimerase/dehydratase family. HldD subfamily. Homopentamer. NADP(+) serves as cofactor.

The enzyme catalyses ADP-D-glycero-beta-D-manno-heptose = ADP-L-glycero-beta-D-manno-heptose. It functions in the pathway nucleotide-sugar biosynthesis; ADP-L-glycero-beta-D-manno-heptose biosynthesis; ADP-L-glycero-beta-D-manno-heptose from D-glycero-beta-D-manno-heptose 7-phosphate: step 4/4. In terms of biological role, catalyzes the interconversion between ADP-D-glycero-beta-D-manno-heptose and ADP-L-glycero-beta-D-manno-heptose via an epimerization at carbon 6 of the heptose. The protein is ADP-L-glycero-D-manno-heptose-6-epimerase of Paraburkholderia phytofirmans (strain DSM 17436 / LMG 22146 / PsJN) (Burkholderia phytofirmans).